The sequence spans 158 residues: UPF0266 membrane protein YobD (158 aa).

3 helical membrane-spanning segments follow: residues 6–26 (LVLI…QFIM), 45–65 (IDSV…VTNH), and 67–87 (ALIT…IFWI).

It belongs to the UPF0266 family.

The protein localises to the cell inner membrane. This Shigella boydii serotype 4 (strain Sb227) protein is UPF0266 membrane protein YobD.